A 444-amino-acid chain; its full sequence is P2X purinoceptor 5 (444 aa).

Over 1-30 the chain is Cytoplasmic; it reads MGQAGCKGLCLSLFDYKTEKYVIAKNKKVG. Residues 31 to 51 form a helical membrane-spanning segment; sequence LLYRLLQASILAYLVVWVFLI. Topologically, residues 52–319 are extracellular; the sequence is KKGYQDVDTS…RTLMKAYGIR (268 aa). The N-linked (GlcNAc...) asparagine glycan is linked to Asn-77. Disulfide bonds link Cys-118–Cys-169, Cys-129–Cys-152, and Cys-135–Cys-163. A glycan (N-linked (GlcNAc...) asparagine) is linked at Asn-202. Cystine bridges form between Cys-220–Cys-229 and Cys-263–Cys-272. Residues 320 to 362 form a helical membrane-spanning segment; that stretch reads FDVMVNGKAGKFSIIPTIINVGSGVALMGAGAFFCDLVLIYLI. Residues 363 to 444 are Cytoplasmic-facing; sequence KKREFYRDKK…PQLLEPHRST (82 aa). A disordered region spans residues 378 to 444; sequence GLEDSSQEAE…PQLLEPHRST (67 aa).

The protein belongs to the P2X receptor family. Functional P2XRs are organized as homomeric and heteromeric trimers. Homotrimer. Forms heterotrimer with P2RX1. Expressed at high levels in brain and immune system.

Its subcellular location is the cell membrane. It catalyses the reaction Na(+)(in) = Na(+)(out). The catalysed reaction is Ca(2+)(in) = Ca(2+)(out). The enzyme catalyses chloride(in) = chloride(out). Its activity is regulated as follows. Activated by ATP. Slowly desensitizing. Sensitive to the ATP agonist alpha/beta-methylene-ATP. Functionally, ATP-gated nonselective transmembrane cation channel permeable to potassium, sodium and calcium. Unlike other P2RX receptors, the P2X5 receptor is also permeable to chloride. May play a supporting role in the inflammatory response. Non-functional. This is P2X purinoceptor 5 from Homo sapiens (Human).